Reading from the N-terminus, the 64-residue chain is Bacteriocin glycocin F (64 aa).

The N-terminal stretch at 1-21 is a signal peptide; that stretch reads MSKLVKTLTISEISKAQNNGG. Disulfide bonds link Cys-26–Cys-49 and Cys-33–Cys-42. O-linked (GlcNAc) serine glycosylation occurs at Ser-39. A glycan (S-linked (GlcNAc) cysteine) is linked at Cys-64.

The protein resides in the secreted. In terms of biological role, has antibacterial activity against L.plantarum ATCC 8014. In purified form, the activity is bacteriostatic (IC(50)=2 nM) rather than bactericidal. The sequence is that of Bacteriocin glycocin F from Lactiplantibacillus plantarum (Lactobacillus plantarum).